We begin with the raw amino-acid sequence, 717 residues long: Polyribonucleotide nucleotidyltransferase (717 aa).

Mg(2+)-binding residues include D487 and D493. In terms of domain architecture, KH spans 554 to 613 (PRITVINVPKDKIRDVIGTGGKVIREIVEYSGCKIDIEDDGTIKIAATSDEQAQKAIDRI). In terms of domain architecture, S1 motif spans 623 to 691 (GQIYTGKVVK…DRGKVKLSMR (69 aa)).

It belongs to the polyribonucleotide nucleotidyltransferase family. Requires Mg(2+) as cofactor.

It is found in the cytoplasm. The enzyme catalyses RNA(n+1) + phosphate = RNA(n) + a ribonucleoside 5'-diphosphate. Its function is as follows. Involved in mRNA degradation. Catalyzes the phosphorolysis of single-stranded polyribonucleotides processively in the 3'- to 5'-direction. The protein is Polyribonucleotide nucleotidyltransferase of Acidiphilium cryptum (strain JF-5).